We begin with the raw amino-acid sequence, 362 residues long: Oryzain gamma chain (362 aa).

The signal sequence occupies residues 1 to 24 (MAHRRIILLLAAAAVAATSAVAAA). A propeptide spans 25-144 (SSGFDDSNPI…GNHRMRDAAA (120 aa)) (activation peptide). Asn128 carries N-linked (GlcNAc...) asparagine glycosylation. 2 disulfide bridges follow: Cys166-Cys209 and Cys200-Cys242. Cys169 is a catalytic residue. An N-linked (GlcNAc...) asparagine glycan is attached at Asn258. Cys300 and Cys350 are joined by a disulfide. Residues His309 and Asn329 contribute to the active site.

The protein belongs to the peptidase C1 family. As to expression, expressed only in seeds.

This chain is Oryzain gamma chain, found in Oryza sativa subsp. japonica (Rice).